A 532-amino-acid chain; its full sequence is MRERIITFVSLLLVALLSFPSVSYCDDQTILYESFDEPFDGRWVVSEKAEYQGVWKHEKSEGHDDYGLLVSEKAKKYGIVKELDVDEPLNLNEGTVVLQYEARFQEGLECGGAYLKYLRPQEAGWVPQGFDNDSPYSIMFGPDKCGATNKVHFILKHKNPKSGEFVEHHLKFPPSVPFDMLSHVYTAVLKSDNEVRILVDGEEKKKGNLLSAEDFEPPLIPSKTIPDPEDKKPEDWDERAKIPDPNAVKPDDWDEDAPMEIEDEEAEKPEGWLDDEPVEVEDPEASKPEDWDDEEDGEWEAPKVSNTKCEAAPGCGEWKRPMKRNPAYKGKWSSPLIDNPAYKGIWKPRDIPNPDYFELERPNLEPIAAIGIEIWTMQDGILFDNILISKDEKVAETYRQSTWKPKFDVEKEKQKAEDEAAGEADGLKSYQKKVFDLLYKVADISFLSAYKSKIMELIEKAETQPNLTIGVLISIVIVFLSLFFKLIFGGAKAKVEKKKPETAAETSTSEAKTEEKAEAVAAPRKRQTRRES.

Positions 1 to 25 (MRERIITFVSLLLVALLSFPSVSYC) are cleaved as a signal peptide. The Lumenal portion of the chain corresponds to 26-468 (DDQTILYESF…EKAETQPNLT (443 aa)). 2 residues coordinate Ca(2+): serine 34 and aspartate 65. The cysteines at positions 110 and 145 are disulfide-linked. An alpha-D-glucoside-binding residues include tyrosine 114, lysine 116, tyrosine 136, and aspartate 143. Residues 208-302 (NLLSAEDFEP…DEEDGEWEAP (95 aa)) form a disordered region. The tract at residues 225–358 (IPDPEDKKPE…RDIPNPDYFE (134 aa)) is p domain (Extended arm). A compositionally biased stretch (basic and acidic residues) spans 226–242 (PDPEDKKPEDWDERAKI). Tandem repeats lie at residues 227-238 (DPEDKKPEDWDE), 244-255 (DPNAVKPDDWDE), 263-274 (DEEAEKPEGWLD), 282-293 (DPEASKPEDWDD), and 297-307 (GEWEAPKVSNT). 4 X approximate repeats stretches follow at residues 227–293 (DPED…DWDD) and 297–354 (GEWE…IPNP). 2 stretches are compositionally biased toward acidic residues: residues 252–283 (DWDEDAPMEIEDEEAEKPEGWLDDEPVEVEDP) and 290–299 (DWDDEEDGEW). Residues cysteine 309 and cysteine 315 are joined by a disulfide bond. Repeat copies occupy residues 316-326 (GEWKRPMKRNP), 330-340 (GKWSSPLIDNP), and 344-354 (GIWKPRDIPNP). An alpha-D-glucoside is bound at residue glutamate 373. Aspartate 384 is a Ca(2+) binding site. The N-linked (GlcNAc...) asparagine glycan is linked to asparagine 466. The chain crosses the membrane as a helical span at residues 469 to 489 (IGVLISIVIVFLSLFFKLIFG). At 490 to 532 (GAKAKVEKKKPETAAETSTSEAKTEEKAEAVAAPRKRQTRRES) the chain is on the cytoplasmic side. The tract at residues 493–532 (AKVEKKKPETAAETSTSEAKTEEKAEAVAAPRKRQTRRES) is disordered. Over residues 523–532 (PRKRQTRRES) the composition is skewed to basic residues.

This sequence belongs to the calreticulin family.

It is found in the endoplasmic reticulum membrane. Functionally, calcium-binding protein that interacts with newly synthesized monoglucosylated glycoproteins in the endoplasmic reticulum. It may act in assisting protein assembly and/or in the retention within the ER of unassembled protein subunits. It seems to play a major role in the quality control apparatus of the ER by the retention of incorrectly folded proteins. This chain is Calnexin homolog 2, found in Arabidopsis thaliana (Mouse-ear cress).